A 1100-amino-acid chain; its full sequence is Sorbin and SH3 domain-containing protein 2 (1100 aa).

Y13, S14, H27, G28, S30, and S43 each carry phosphoserine. Polar residues predominate over residues 30 to 52 (SLDSTDTYPQHAQSLDGTTSSSI). The tract at residues 30-57 (SLDSTDTYPQHAQSLDGTTSSSIPLYRS) is disordered. The region spanning 66-127 (VIKAPHYPGI…YNTPYTYNAG (62 aa)) is the SoHo domain. Residues 134-147 (SAQSHPAAKTQTYR) are compositionally biased toward polar residues. The interval 134-311 (SAQSHPAAKT…SPSRAKGGDD (178 aa)) is disordered. H153 carries the post-translational modification Alanine amide. Phosphoserine occurs at positions 154 and 157. Over residues 167–180 (PVPPPHVPPPVPPL) the composition is skewed to pro residues. Over residues 181–217 (RPRDRSSTEKHDWDPPDRKVDTRKFRSEPRSIFEYEP) the composition is skewed to basic and acidic residues. Residues S234 and I236 each carry the phosphothreonine modification. A phosphoserine mark is found at S239, S245, S248, K258, S259, and E260. Phosphothreonine is present on residues T277, G280, and V282. S287 bears the Phosphoserine mark. A compositionally biased stretch (low complexity) spans 287-304 (SSTTLTKSFTSSSPSSPS). The residue at position 292 (T292) is a Phosphothreonine. Residues F295, S297, S298, S299, S301, S302, S304, A306, D311, and P316 each carry the phosphoserine modification. S320, S322, and G326 each carry phosphothreonine. H341, V344, and R346 each carry phosphoserine. Position 366 is a phosphothreonine (E366). S381 and S383 each carry phosphoserine. Residues D413 and K415 each carry the phosphothreonine modification. Phosphoserine occurs at positions 437 and 439. I459 is modified (phosphothreonine). Residues K474, S494, S497, S550, and S750 each carry the phosphoserine modification. The interval 807–866 (RMPRSASFQDVDTANSSCHHQDRGGALQDRESPRSYSSTLTDMGRSAPRERRGTPEKEKL) is disordered. Over residues 812–824 (ASFQDVDTANSSC) the composition is skewed to polar residues. Over residues 825–839 (HHQDRGGALQDRESP) the composition is skewed to basic and acidic residues. S843 carries the post-translational modification Phosphoserine. Over residues 853–866 (APRERRGTPEKEKL) the composition is skewed to basic and acidic residues. SH3 domains lie at 863–922 (KEKL…KLTP) and 938–999 (GEIG…VVKK). 2 positions are modified to phosphoserine: S1017 and S1023. The SH3 3 domain occupies 1041-1100 (GGGEPFQALYNYTPRNEDELELRESDVIDVMEKCDDGWFVGTSRRTKFFGTFPGNYVKRL).

In terms of assembly, interacts with ABL, CBL, DNM1, DNM2, FLOT1, AFDN, PTK2B/PYK2, SAPAP, SPTAN1, SYNJ1, SYNJ2, VCL/vinculin and WASF. Interacts with ABL1/c-Abl, ABL2/v-Abl/Arg, ACTN, CBL and PALLD. Interacts with PTPN12 and WASF1 via its SH3 domains; this interaction may mediate the partial PTPN12 and WASF1 translocation to focal adhesion sites. Ubiquitinated by CBL. Post-translationally, dephosphorylated by PTPN12. In terms of tissue distribution, abundantly expressed in heart. In cardiac muscle cells, located in the Z-disks of sarcomere. Also found, but to a lower extent, in small and large intestine, pancreas, thymus, colon, spleen, prostate, testis, brain, ovary and epithelial cells. In the pancreas, mainly expressed in acinar cells, duct cells and all cell types in islets (at protein level). Tends to be down-regulated in pancreatic adenocarcinomas ans metastases.

Its subcellular location is the cytoplasm. It localises to the perinuclear region. It is found in the apical cell membrane. The protein localises to the cell junction. The protein resides in the focal adhesion. Its subcellular location is the cell projection. It localises to the lamellipodium. In terms of biological role, adapter protein that plays a role in the assembling of signaling complexes, being a link between ABL kinases and actin cytoskeleton. Can form complex with ABL1 and CBL, thus promoting ubiquitination and degradation of ABL1. May play a role in the regulation of pancreatic cell adhesion, possibly by acting on WASF1 phosphorylation, enhancing phosphorylation by ABL1, as well as dephosphorylation by PTPN12. Isoform 6 increases water and sodium absorption in the intestine and gall-bladder. The sequence is that of Sorbin and SH3 domain-containing protein 2 (SORBS2) from Homo sapiens (Human).